The sequence spans 276 residues: 2-dehydro-3-deoxyphosphooctonate aldolase (276 aa).

Belongs to the KdsA family.

It localises to the cytoplasm. The catalysed reaction is D-arabinose 5-phosphate + phosphoenolpyruvate + H2O = 3-deoxy-alpha-D-manno-2-octulosonate-8-phosphate + phosphate. Its pathway is carbohydrate biosynthesis; 3-deoxy-D-manno-octulosonate biosynthesis; 3-deoxy-D-manno-octulosonate from D-ribulose 5-phosphate: step 2/3. It participates in bacterial outer membrane biogenesis; lipopolysaccharide biosynthesis. This chain is 2-dehydro-3-deoxyphosphooctonate aldolase, found in Xanthomonas axonopodis pv. citri (strain 306).